Here is a 247-residue protein sequence, read N- to C-terminus: NifU-like scaffold protein (247 aa).

The protein belongs to the NifU family. In terms of assembly, homodimer.

It is found in the plastid. Its subcellular location is the apicoplast. The protein operates within cofactor biosynthesis; iron-sulfur cluster biosynthesis. Functionally, binds and transfers [4Fe-4S] iron-sulfur clusters to target proteins. This chain is NifU-like scaffold protein, found in Plasmodium falciparum (isolate 3D7).